The chain runs to 82 residues: Cytochrome c-551 (82 aa).

Cys-12, Cys-15, His-16, and Met-61 together coordinate heme c.

Post-translationally, binds 1 heme c group covalently per subunit.

In terms of biological role, this is a prokaryotic monoheme cytochrome, unreactive with mitochondrial cytochrome C oxidase or reductase. It functions in nitrite and nitrate respiration in Pseudomonas, but it is also found in other bacteria. The polypeptide is Cytochrome c-551 (Pseudomonas denitrificans).